We begin with the raw amino-acid sequence, 423 residues long: Dihydroorotase-like protein (423 aa).

Belongs to the metallo-dependent hydrolases superfamily. DHOase family. PyrC' subfamily. As to quaternary structure, heterododecamer of 6 active PyrB subunits and 6 non-catalytic PyrC' subunits.

Non-functional DHOase. The chain is Dihydroorotase-like protein (pyrC') from Pseudomonas aeruginosa (strain ATCC 15692 / DSM 22644 / CIP 104116 / JCM 14847 / LMG 12228 / 1C / PRS 101 / PAO1).